The chain runs to 1502 residues: G patch domain-containing protein 8 (1502 aa).

Positions 40-86 constitute a G-patch domain; that stretch reads SDNIGHRLLQKHGWKLGQGLGKSLQGRTDPIPIVVKYDVMGMGRMEM. A coiled-coil region spans residues 89–124; that stretch reads DYAEDATERRRVLEVEKEDTEELRQKYKDYVDKEKA. Residues 136 to 160 form a C2H2-type zinc finger; that stretch reads FYCELCDKQYQKHQEFDNHINSYDH. Residues 172–251 form a disordered region; sequence REFARNVSSR…GATASCGLGS (80 aa). Over residues 182 to 206 the composition is skewed to basic and acidic residues; sequence SRKDEKKQEKALRRLHELAEQRKQA. Residues 223 to 233 show a composition bias toward acidic residues; it reads VDEEGGEDDKD. Residue Lys-311 forms a Glycyl lysine isopeptide (Lys-Gly) (interchain with G-Cter in SUMO2) linkage. Basic and acidic residues-rich tracts occupy residues 323-339 and 424-436; these read AEEG…EKSS and NTTH…ESKK. Disordered regions lie at residues 323–391 and 419–541; these read AEEG…ATEP and QMDG…FPVL. Residues 459–472 are compositionally biased toward polar residues; that stretch reads SEVSEQPKETSMTE. At Lys-479 the chain carries N6-acetyllysine. Ser-491 bears the Phosphoserine mark. A compositionally biased stretch (polar residues) spans 491 to 519; sequence SDQSLESHSQKVSETQMCESNSSKETSLA. Lys-577 is covalently cross-linked (Glycyl lysine isopeptide (Lys-Gly) (interchain with G-Cter in SUMO2)). Composition is skewed to basic and acidic residues over residues 579–623 and 653–670; these read SRNK…EKIV and SETE…ERSG. Positions 579-1301 are disordered; the sequence is SRNKDARTKG…ESTDGAEDAS (723 aa). Ser-653 carries the phosphoserine modification. Residues 671–692 are compositionally biased toward basic residues; it reads KSHRHKKKKKHKKSSKHKRKHK. Residues 693–707 show a composition bias toward basic and acidic residues; that stretch reads ADTEEKSSKAESGEK. Residues 708-720 are compositionally biased toward basic residues; the sequence is SKKRKKRKRKKNK. Pro residues predominate over residues 733 to 743; the sequence is PEPPGSGSPAP. A phosphoserine mark is found at Ser-738, Ser-740, and Ser-758. A compositionally biased stretch (basic and acidic residues) spans 750–772; sequence AQDDSQRRSLPAEEGSSGKKDEG. 2 stretches are compositionally biased toward basic residues: residues 799 to 809 and 852 to 867; these read AGTKRSSRSSH and SRSR…RSSR. Low complexity predominate over residues 868 to 896; the sequence is RSYSSSSDASSDQSCYSRQRSYSDDSYSD. Phosphoserine occurs at positions 911 and 914. Over residues 919–928 the composition is skewed to basic residues; sequence SKHRSKRHKY. A phosphoserine mark is found at Ser-981, Ser-1009, Ser-1014, Ser-1033, and Ser-1035. Residues 1010–1027 are compositionally biased toward basic and acidic residues; the sequence is WGHESPEERHSGRRDFIR. The span at 1042–1059 shows a compositional bias: basic and acidic residues; the sequence is GRGEGPGKKDDGRGDDSK. Ser-1081 is modified (phosphoserine). Composition is skewed to basic and acidic residues over residues 1093–1108 and 1159–1171; these read LLEK…KPSV and KKCE…RGEE. Residue Lys-1105 forms a Glycyl lysine isopeptide (Lys-Gly) (interchain with G-Cter in SUMO2) linkage. The residue at position 1107 (Ser-1107) is a Phosphoserine. Ser-1175 is modified (phosphoserine).

The chain is G patch domain-containing protein 8 (GPATCH8) from Homo sapiens (Human).